Consider the following 229-residue polypeptide: uncharacterized protein (229 aa).

The S4 RNA-binding domain maps to 2-69 (QRLAKIISNA…KPRLWIYYKP (68 aa)). Asp102 functions as the Nucleophile in the catalytic mechanism.

The protein belongs to the pseudouridine synthase RsuA family.

It catalyses the reaction a uridine in RNA = a pseudouridine in RNA. This is an uncharacterized protein from Rickettsia felis (strain ATCC VR-1525 / URRWXCal2) (Rickettsia azadi).